The sequence spans 255 residues: Coenzyme F420:L-glutamate ligase (255 aa).

GTP-binding positions include 11–14 (IPLI), 40–41 (ST), and K45. D109 lines the a divalent metal cation pocket. N112 contacts GTP. Residues D150, T151, and E208 each contribute to the a divalent metal cation site. Residue 206–213 (MGEGAGGT) coordinates GTP.

It belongs to the CofE family. In terms of assembly, homodimer. Requires Mg(2+) as cofactor. The cofactor is Mn(2+). K(+) serves as cofactor.

The enzyme catalyses oxidized coenzyme F420-0 + GTP + L-glutamate = oxidized coenzyme F420-1 + GDP + phosphate + H(+). It catalyses the reaction oxidized coenzyme F420-1 + GTP + L-glutamate = oxidized coenzyme F420-2 + GDP + phosphate + H(+). It participates in cofactor biosynthesis; coenzyme F420 biosynthesis. Catalyzes the GTP-dependent successive addition of two or more gamma-linked L-glutamates to the L-lactyl phosphodiester of 7,8-didemethyl-8-hydroxy-5-deazariboflavin (F420-0) to form coenzyme F420-0-glutamyl-glutamate (F420-2) or polyglutamated F420 derivatives. The chain is Coenzyme F420:L-glutamate ligase from Methanosarcina barkeri (strain Fusaro / DSM 804).